The following is a 476-amino-acid chain: Probable cytosolic Fe-S cluster assembly factor GF22738 (476 aa).

Cys-23, Cys-68, Cys-71, Cys-74, Cys-187, Cys-243, Cys-395, and Cys-399 together coordinate [4Fe-4S] cluster.

This sequence belongs to the NARF family.

Its function is as follows. Component of the cytosolic iron-sulfur (Fe/S) protein assembly machinery. Required for maturation of extramitochondrial Fe/S proteins. The polypeptide is Probable cytosolic Fe-S cluster assembly factor GF22738 (Drosophila ananassae (Fruit fly)).